Here is a 556-residue protein sequence, read N- to C-terminus: Dihydroxy-acid dehydratase (556 aa).

C47 lines the [2Fe-2S] cluster pocket. D79 contacts Mg(2+). Residue C120 participates in [2Fe-2S] cluster binding. Residues D121 and K122 each contribute to the Mg(2+) site. Position 122 is an N6-carboxylysine (K122). Position 192 (C192) interacts with [2Fe-2S] cluster. E444 serves as a coordination point for Mg(2+). The active-site Proton acceptor is S470.

It belongs to the IlvD/Edd family. In terms of assembly, homodimer. The cofactor is [2Fe-2S] cluster. It depends on Mg(2+) as a cofactor.

It carries out the reaction (2R)-2,3-dihydroxy-3-methylbutanoate = 3-methyl-2-oxobutanoate + H2O. The catalysed reaction is (2R,3R)-2,3-dihydroxy-3-methylpentanoate = (S)-3-methyl-2-oxopentanoate + H2O. The protein operates within amino-acid biosynthesis; L-isoleucine biosynthesis; L-isoleucine from 2-oxobutanoate: step 3/4. Its pathway is amino-acid biosynthesis; L-valine biosynthesis; L-valine from pyruvate: step 3/4. Its function is as follows. Functions in the biosynthesis of branched-chain amino acids. Catalyzes the dehydration of (2R,3R)-2,3-dihydroxy-3-methylpentanoate (2,3-dihydroxy-3-methylvalerate) into 2-oxo-3-methylpentanoate (2-oxo-3-methylvalerate) and of (2R)-2,3-dihydroxy-3-methylbutanoate (2,3-dihydroxyisovalerate) into 2-oxo-3-methylbutanoate (2-oxoisovalerate), the penultimate precursor to L-isoleucine and L-valine, respectively. The chain is Dihydroxy-acid dehydratase from Prochlorococcus marinus (strain MIT 9313).